Here is a 737-residue protein sequence, read N- to C-terminus: Phosphoribosylformylglycinamidine synthase subunit PurL (737 aa).

H50 is a catalytic residue. 2 residues coordinate ATP: Y53 and K92. Position 94 (E94) interacts with Mg(2+). Residues 95–98 (SHNH) and R117 each bind substrate. The active-site Proton acceptor is the H96. A Mg(2+)-binding site is contributed by D118. Q241 is a binding site for substrate. D269 is a binding site for Mg(2+). 313-315 (ESQ) is a binding site for substrate. ATP-binding residues include D494 and G531. N532 lines the Mg(2+) pocket. Residue S534 participates in substrate binding.

It belongs to the FGAMS family. As to quaternary structure, monomer. Part of the FGAM synthase complex composed of 1 PurL, 1 PurQ and 2 PurS subunits.

The protein localises to the cytoplasm. It catalyses the reaction N(2)-formyl-N(1)-(5-phospho-beta-D-ribosyl)glycinamide + L-glutamine + ATP + H2O = 2-formamido-N(1)-(5-O-phospho-beta-D-ribosyl)acetamidine + L-glutamate + ADP + phosphate + H(+). The protein operates within purine metabolism; IMP biosynthesis via de novo pathway; 5-amino-1-(5-phospho-D-ribosyl)imidazole from N(2)-formyl-N(1)-(5-phospho-D-ribosyl)glycinamide: step 1/2. Functionally, part of the phosphoribosylformylglycinamidine synthase complex involved in the purines biosynthetic pathway. Catalyzes the ATP-dependent conversion of formylglycinamide ribonucleotide (FGAR) and glutamine to yield formylglycinamidine ribonucleotide (FGAM) and glutamate. The FGAM synthase complex is composed of three subunits. PurQ produces an ammonia molecule by converting glutamine to glutamate. PurL transfers the ammonia molecule to FGAR to form FGAM in an ATP-dependent manner. PurS interacts with PurQ and PurL and is thought to assist in the transfer of the ammonia molecule from PurQ to PurL. The sequence is that of Phosphoribosylformylglycinamidine synthase subunit PurL from Rhodopseudomonas palustris (strain BisA53).